The chain runs to 473 residues: Ammonium transporter Rh type C (473 aa).

The Cytoplasmic portion of the chain corresponds to 1-9 (MLRNSNMRW). Residues 10–30 (RLPLICFVWEIAMIVLFGIFV) traverse the membrane as a helical segment. The Extracellular portion of the chain corresponds to 31-61 (RYNDEADPHWPIFMKHENITSDIENDFYFRY). Residue N48 is glycosylated (N-linked (GlcNAc...) asparagine). Residues 62–82 (PSFQDVHVMIFVGFGFLMTFL) traverse the membrane as a helical segment. Residues 83-86 (QRYG) are Cytoplasmic-facing. A helical transmembrane segment spans residues 87-107 (FGSVAFNFLLAAFGIQWALLM). At 108-125 (QGWFHTFVNGKILIGVES) the chain is on the extracellular side. Residues 126–145 (LINADFCVGSVCIAFGGVLG) form a helical membrane-spanning segment. The Cytoplasmic segment spans residues 146 to 151 (KVSPVQ). A helical transmembrane segment spans residues 152–171 (IMLMTLFQVTLFAVNEWILL). Over 172–179 (NKLHVIDA) the chain is Extracellular. Residues 180-200 (GGSMTIHTFGAYFGLTVAWIL) form a helical membrane-spanning segment. Topologically, residues 201 to 219 (SRPKLKQNNDKEGSTYISD) are cytoplasmic. The helical transmembrane segment at 220–240 (LFSMIGTLFLWMYWPSFNSAI) threads the bilayer. The Extracellular portion of the chain corresponds to 241–251 (SYHGDAQHRAA). Residues 252 to 272 (INTYCSLAACVLTTVAISSVV) traverse the membrane as a helical segment. At 273–285 (NKKGKLEMVHIQN) the chain is on the cytoplasmic side. Residues 286–306 (ATLAGGVAVGTAAEMMLTPYG) traverse the membrane as a helical segment. A topological domain (extracellular) is located at residue S307. A helical membrane pass occupies residues 308-328 (LIVGFICGIVSTLGFTYLSPI). At 329–343 (LSNKLRLHDTCGIHN) the chain is on the cytoplasmic side. The chain crosses the membrane as a helical span at residues 344–364 (LHAIPGLIGGIVGAVTAACAT). At 365 to 396 (EGVYTAEGLKKMFHFEGEYADRTPSIQGIYQA) the chain is on the extracellular side. A helical transmembrane segment spans residues 397 to 417 (AGIGVSLAFGIVGGTVVGCIL). Residues 418 to 473 (KLPIWGDPSDENCFDDDVYWELREEDEEEHLGAANQYITHLPENFKLPDRTEISFK) are Cytoplasmic-facing.

It belongs to the ammonium transporter (TC 2.A.49) family. Rh subfamily. In terms of assembly, homotrimer.

It is found in the apical cell membrane. In terms of biological role, functions as an ammonia transporter. This Xenopus laevis (African clawed frog) protein is Ammonium transporter Rh type C (rhcg).